We begin with the raw amino-acid sequence, 470 residues long: Siroheme synthase (470 aa).

The segment at 1 to 203 (MEFFPIFLKL…GDEAAARAEM (203 aa)) is precorrin-2 dehydrogenase /sirohydrochlorin ferrochelatase. NAD(+) contacts are provided by residues 22–23 (EV) and 43–44 (PE). Serine 128 bears the Phosphoserine mark. The tract at residues 216–470 (GAVYLVGAGP…ENSAVTIQED (255 aa)) is uroporphyrinogen-III C-methyltransferase. Proline 225 lines the S-adenosyl-L-methionine pocket. Aspartate 248 acts as the Proton acceptor in catalysis. The Proton donor role is filled by lysine 270. S-adenosyl-L-methionine contacts are provided by residues 301–303 (GGD), methionine 383, and alanine 412.

In the N-terminal section; belongs to the precorrin-2 dehydrogenase / sirohydrochlorin ferrochelatase family. It in the C-terminal section; belongs to the precorrin methyltransferase family.

It carries out the reaction uroporphyrinogen III + 2 S-adenosyl-L-methionine = precorrin-2 + 2 S-adenosyl-L-homocysteine + H(+). The catalysed reaction is precorrin-2 + NAD(+) = sirohydrochlorin + NADH + 2 H(+). The enzyme catalyses siroheme + 2 H(+) = sirohydrochlorin + Fe(2+). It functions in the pathway cofactor biosynthesis; adenosylcobalamin biosynthesis; precorrin-2 from uroporphyrinogen III: step 1/1. The protein operates within cofactor biosynthesis; adenosylcobalamin biosynthesis; sirohydrochlorin from precorrin-2: step 1/1. Its pathway is porphyrin-containing compound metabolism; siroheme biosynthesis; precorrin-2 from uroporphyrinogen III: step 1/1. It participates in porphyrin-containing compound metabolism; siroheme biosynthesis; siroheme from sirohydrochlorin: step 1/1. It functions in the pathway porphyrin-containing compound metabolism; siroheme biosynthesis; sirohydrochlorin from precorrin-2: step 1/1. Its function is as follows. Multifunctional enzyme that catalyzes the SAM-dependent methylations of uroporphyrinogen III at position C-2 and C-7 to form precorrin-2 via precorrin-1. Then it catalyzes the NAD-dependent ring dehydrogenation of precorrin-2 to yield sirohydrochlorin. Finally, it catalyzes the ferrochelation of sirohydrochlorin to yield siroheme. In Chromobacterium violaceum (strain ATCC 12472 / DSM 30191 / JCM 1249 / CCUG 213 / NBRC 12614 / NCIMB 9131 / NCTC 9757 / MK), this protein is Siroheme synthase.